Consider the following 49-residue polypeptide: Large ribosomal subunit protein eL40 (49 aa).

It belongs to the eukaryotic ribosomal protein eL40 family.

This is Large ribosomal subunit protein eL40 from Methanosarcina acetivorans (strain ATCC 35395 / DSM 2834 / JCM 12185 / C2A).